Consider the following 417-residue polypeptide: 3-ketoacyl-CoA thiolase, peroxisomal (417 aa).

Residues 1-15 constitute a peroxisome transit peptide; sequence MSQRLQSIKDHLVES. A PTS2-type peroxisomal targeting signal region spans residues 1-15; sequence MSQRLQSIKDHLVES. Catalysis depends on C125, which acts as the Acyl-thioester intermediate. Active-site proton acceptor residues include H375 and C403.

The protein belongs to the thiolase-like superfamily. Thiolase family. Homodimer. Interacts (via PTS2-type peroxisomal targeting signal region) with PEX7; leading to its translocation into peroxisomes.

It is found in the peroxisome. The protein resides in the mitochondrion intermembrane space. The enzyme catalyses an acyl-CoA + acetyl-CoA = a 3-oxoacyl-CoA + CoA. The protein operates within lipid metabolism; fatty acid metabolism. In terms of biological role, responsible for the thiolytic cleavage of straight chain 3-keto fatty acyl-CoAs (3-oxoacyl-CoAs). The polypeptide is 3-ketoacyl-CoA thiolase, peroxisomal (POT1) (Saccharomyces cerevisiae (strain ATCC 204508 / S288c) (Baker's yeast)).